The sequence spans 111 residues: MASNQELACVYAALILQDDEVAITGEKIATLLKAANVEFEPYWPGLFAKALEGVDVKNLITSVSSGAGSGPAPAAAAAAPAAGGAAPAAETKKKEEPKEESDDDMGFGLFD.

Low complexity predominate over residues 65–89; that stretch reads SGAGSGPAPAAAAAAPAAGGAAPAA. The segment at 65–111 is disordered; that stretch reads SGAGSGPAPAAAAAAPAAGGAAPAAETKKKEEPKEESDDDMGFGLFD.

The protein belongs to the eukaryotic ribosomal protein P1/P2 family. As to quaternary structure, P1 and P2 exist as dimers at the large ribosomal subunit.

In terms of biological role, plays an important role in the elongation step of protein synthesis. The sequence is that of Large ribosomal subunit protein P1 from Caenorhabditis elegans.